The sequence spans 691 residues: Probable E3 ubiquitin-protein ligase RHG1A (691 aa).

Disordered stretches follow at residues 71 to 91 (SLGEASSSGTKDEASSHNEQR), 151 to 235 (GPGT…PRGM), 316 to 336 (SFVVSRNPNSTPVSIPPGSRT), 349 to 373 (VGGTSNSTAPVERNLHLDETRSRSI), and 395 to 501 (QSSR…MHNR). A compositionally biased stretch (basic and acidic residues) spans 80-91 (TKDEASSHNEQR). Polar residues-rich tracts occupy residues 204–213 (GESSSWTPGS) and 317–328 (FVVSRNPNSTPV). The span at 361–370 (RNLHLDETRS) shows a compositional bias: basic and acidic residues. Residues 395–406 (QSSRNVTNGNLN) show a composition bias toward polar residues. A compositionally biased stretch (low complexity) spans 407-419 (SASSVSRTGSTTS). Residues 429–440 (NLAWTSYQNSPH) show a composition bias toward polar residues. Low complexity predominate over residues 454–465 (RSLLSSLAADAT). The RING-type; atypical zinc finger occupies 637 to 678 (CCVCQEEYTEGEDMGTLECGHEFHSQCIKEWLKQKNLCPICK).

As to expression, expressed in stems, flowers, green siliques, cauline leaves, seeds and roots.

It carries out the reaction S-ubiquitinyl-[E2 ubiquitin-conjugating enzyme]-L-cysteine + [acceptor protein]-L-lysine = [E2 ubiquitin-conjugating enzyme]-L-cysteine + N(6)-ubiquitinyl-[acceptor protein]-L-lysine.. It participates in protein modification; protein ubiquitination. Its function is as follows. Probable E3 ubiquitin-protein ligase that may possess E3 ubiquitin ligase activity in vitro. The sequence is that of Probable E3 ubiquitin-protein ligase RHG1A from Arabidopsis thaliana (Mouse-ear cress).